The primary structure comprises 205 residues: Ferritin heavy chain (205 aa).

The N-terminal stretch at 1–19 (MVKLIASLLLLAVVAQAYG) is a signal peptide. The 156-residue stretch at 35–190 (VDMKDACIKG…GKLTTLKKMM (156 aa)) folds into the Ferritin-like diiron domain. C41 and C150 form a disulfide bridge. Fe cation is bound by residues E52, E87, H90, E136, and Q172.

Belongs to the ferritin family. Oligomer of 12 light (L) chains and 12 heavy (H) chains; L and H chains are disulfide-linked. The functional molecule forms a roughly spherical shell with a diameter of 12 nm and contains a central cavity into which the insoluble ferric iron core is deposited. As to expression, expressed in hemolymph and gut (at protein level). Expressed in the head (at protein level). Expressed in thorax and abdomen.

It localises to the golgi apparatus. Its subcellular location is the secreted. It catalyses the reaction 4 Fe(2+) + O2 + 4 H(+) = 4 Fe(3+) + 2 H2O. Stores iron in a soluble, non-toxic, readily available form. Important for iron homeostasis. Iron is taken up in the ferrous form and deposited as ferric hydroxides after oxidation. Ferritin is composed of a heavy (H) chain which is responsible for the oxidation and uptake of ferrous iron, and a light (L) chain which facilitates the nucleation of the ferrihydrite iron core. Required for dietary iron absorption in the midgut. Involved in tissue iron detoxification by exporting excess iron. Functions as an antioxidant and protects the developing organs from cell-mediated ferroptosis. Required for embryo and larval development. Plays a role in blood cell (haemocyte) differentiation in the lymph gland at the larval stage. May also store Zn(2+) and Mn(2+) and thus may play a role in zinc and manganese homeostasis. The polypeptide is Ferritin heavy chain (Drosophila melanogaster (Fruit fly)).